The following is a 473-amino-acid chain: H(+)/Cl(-) exchange transporter ClcA (473 aa).

The Cytoplasmic segment spans residues 1–32; the sequence is MKTDTSTFLAQQIVRLRRRDQIRRLMQRDKTP. The helical transmembrane segment at 33–69 threads the bilayer; sequence LAILFMAAVVGTLTGLVGVAFEKAVSWVQNMRIGALV. Residues 70–76 lie on the Periplasmic side of the membrane; the sequence is QVADHAF. Residues 77–100 traverse the membrane as a helical segment; sequence LLWPLAFILSALLAMVGYFLVRKF. The Selectivity filter part_1 motif lies at 106-110; the sequence is GSGIP. S107 serves as a coordination point for chloride. The helical intramembrane region spans 109-116; that stretch reads IPEIEGAL. Residues 117–123 lie on the Cytoplasmic side of the membrane; sequence EELRPVR. 2 helical membrane passes run 124–141 and 148–166; these read WWRVLPVKFIGGMGTLGA and EGPTVQIGGNLGRMVLDVF. Positions 146–150 match the Selectivity filter part_2 motif; it reads GREGP. The Cytoplasmic segment spans residues 167-176; that stretch reads RMRSAEARHT. 2 intramembrane regions (helical) span residues 177–189 and 193–201; these read LLATGAAAGLSAA and PLAGILFII. The Cytoplasmic segment spans residues 202-214; sequence EEMRPQFRYNLIS. Residues 215 to 232 traverse the membrane as a helical segment; it reads IKAVFTGVIMSSIVFRIF. The Periplasmic segment spans residues 233–252; it reads NGEAPIIEVGKLSDAPVNTL. Residues 253–281 form a helical membrane-spanning segment; it reads WLYLILGIIFGCVGPVFNSLVLRTQDMFQ. The Cytoplasmic portion of the chain corresponds to 282-287; the sequence is RFHGGE. Residues 288 to 309 traverse the membrane as a helical segment; sequence IKKWVLMGGAIGGLCGILGLIE. Residues 310-329 are Periplasmic-facing; it reads PEAAGGGFNLIPIAAAGNFS. 2 helical membrane passes run 330 to 349 and 355 to 376; these read VGLLLFIFIARVVTTLLCFS and GIFAPMLALGTLLGTAFGMAAA. Positions 355-359 match the Selectivity filter part_3 motif; sequence GIFAP. Chloride-binding residues include I356 and F357. The Periplasmic portion of the chain corresponds to 377–386; the sequence is VLFPQYHLEA. Residues 387–401 constitute an intramembrane region (helical); that stretch reads GTFAIAGMGALMAAS. The note=Loop between two helices intramembrane region spans 402–404; it reads VRA. Positions 405 to 416 form an intramembrane region, helical; it reads PLTGIVLVLEMT. An intramembrane region (note=Loop between two helices) is located at residues 417-421; the sequence is DNYQL. A helical membrane pass occupies residues 422–438; sequence ILPMIITCLGATLLAQF. Over 439-473 the chain is Cytoplasmic; the sequence is LGGKPLYSTILARTLAKQDAEQAAKNQNAPAGENT. Residue Y445 coordinates chloride.

It belongs to the chloride channel (TC 2.A.49) family. ClcA subfamily. As to quaternary structure, homodimer.

Its subcellular location is the cell inner membrane. It carries out the reaction 2 chloride(in) + H(+)(out) = 2 chloride(out) + H(+)(in). Proton-coupled chloride transporter. Functions as antiport system and exchanges two chloride ions for 1 proton. Probably acts as an electrical shunt for an outwardly-directed proton pump that is linked to amino acid decarboxylation, as part of the extreme acid resistance (XAR) response. The sequence is that of H(+)/Cl(-) exchange transporter ClcA from Salmonella agona (strain SL483).